The chain runs to 426 residues: Mannose-6-phosphate isomerase (426 aa).

Positions 112, 114, 139, and 277 each coordinate Zn(2+). Arginine 296 is a catalytic residue.

It belongs to the mannose-6-phosphate isomerase type 1 family. Zn(2+) serves as cofactor.

The protein resides in the cytoplasm. It carries out the reaction D-mannose 6-phosphate = D-fructose 6-phosphate. Its pathway is nucleotide-sugar biosynthesis; GDP-alpha-D-mannose biosynthesis; alpha-D-mannose 1-phosphate from D-fructose 6-phosphate: step 1/2. Functionally, involved in the synthesis of the GDP-mannose and dolichol-phosphate-mannose required for a number of critical mannosyl transfer reactions. This chain is Mannose-6-phosphate isomerase (PMI40), found in Ogataea parapolymorpha (strain ATCC 26012 / BCRC 20466 / JCM 22074 / NRRL Y-7560 / DL-1) (Yeast).